A 248-amino-acid chain; its full sequence is Ribonuclease 3 (248 aa).

The 128-residue stretch at 15–142 folds into the RNase III domain; it reads LKAFFKQYHV…MIAALYLDLG (128 aa). Glutamate 55 contributes to the Mg(2+) binding site. Aspartate 59 is a catalytic residue. Positions 128 and 131 each coordinate Mg(2+). The active site involves glutamate 131. In terms of domain architecture, DRBM spans 169–240; sequence DYKTELQEFL…ARDALQKLAT (72 aa).

This sequence belongs to the ribonuclease III family. Homodimer. Mg(2+) is required as a cofactor.

It is found in the cytoplasm. It carries out the reaction Endonucleolytic cleavage to 5'-phosphomonoester.. Digests double-stranded RNA. Involved in the processing of primary rRNA transcript to yield the immediate precursors to the large and small rRNAs (23S and 16S). Processes some mRNAs, and tRNAs when they are encoded in the rRNA operon. Processes pre-crRNA and tracrRNA of type II CRISPR loci if present in the organism. This is Ribonuclease 3 from Spiroplasma citri.